Reading from the N-terminus, the 261-residue chain is Small ribosomal subunit protein uS2 (261 aa).

Serine 2 carries the N-acetylserine modification. The segment at 211-261 (EQNAAEDSKAEDAEEAPVADAEPDWSGETEDVDWAESGATPAAEEAAASNW) is disordered. Acidic residues predominate over residues 222-244 (DAEEAPVADAEPDWSGETEDVDW). Over residues 245–261 (AESGATPAAEEAAASNW) the composition is skewed to low complexity.

Belongs to the universal ribosomal protein uS2 family. Component of the small ribosomal subunit. Mature ribosomes consist of a small (40S) and a large (60S) subunit. The 40S subunit contains about 33 different proteins and 1 molecule of RNA (18S). The 60S subunit contains about 49 different proteins and 3 molecules of RNA (25S, 5.8S and 5S). Interacts with RPS21.

It is found in the cytoplasm. In terms of biological role, required for the assembly and/or stability of the 40S ribosomal subunit. Required for the processing of the 20S rRNA-precursor to mature 18S rRNA in a late step of the maturation of 40S ribosomal subunits. This is Small ribosomal subunit protein uS2 from Meyerozyma guilliermondii (strain ATCC 6260 / CBS 566 / DSM 6381 / JCM 1539 / NBRC 10279 / NRRL Y-324) (Yeast).